A 128-amino-acid chain; its full sequence is Phosphoribosyl-AMP cyclohydrolase (128 aa).

D94 lines the Mg(2+) pocket. Residue C95 coordinates Zn(2+). Mg(2+)-binding residues include D96 and D98. Zn(2+) contacts are provided by C111 and C118.

This sequence belongs to the PRA-CH family. Homodimer. It depends on Mg(2+) as a cofactor. The cofactor is Zn(2+).

It is found in the cytoplasm. It catalyses the reaction 1-(5-phospho-beta-D-ribosyl)-5'-AMP + H2O = 1-(5-phospho-beta-D-ribosyl)-5-[(5-phospho-beta-D-ribosylamino)methylideneamino]imidazole-4-carboxamide. Its pathway is amino-acid biosynthesis; L-histidine biosynthesis; L-histidine from 5-phospho-alpha-D-ribose 1-diphosphate: step 3/9. Functionally, catalyzes the hydrolysis of the adenine ring of phosphoribosyl-AMP. This chain is Phosphoribosyl-AMP cyclohydrolase, found in Streptomyces coelicolor (strain ATCC BAA-471 / A3(2) / M145).